A 286-amino-acid polypeptide reads, in one-letter code: Pollen allergen Phl p 5a (286 aa).

Positions 1–34 (ADLGYGPATPAAPAAGYTPATPAAPAGADAAGKA) are enriched in low complexity. The interval 1–35 (ADLGYGPATPAAPAAGYTPATPAAPAGADAAGKAT) is disordered.

Belongs to the Poa p IX/Phl p VI allergen family.

Its subcellular location is the secreted. In Phleum pratense (Common timothy), this protein is Pollen allergen Phl p 5a.